Here is a 530-residue protein sequence, read N- to C-terminus: Bifunctional purine biosynthesis protein PurH (530 aa).

Residues 1–149 (MASDFLPVHR…KNFARVAVAT (149 aa)) enclose the MGS-like domain.

The protein belongs to the PurH family.

It carries out the reaction (6R)-10-formyltetrahydrofolate + 5-amino-1-(5-phospho-beta-D-ribosyl)imidazole-4-carboxamide = 5-formamido-1-(5-phospho-D-ribosyl)imidazole-4-carboxamide + (6S)-5,6,7,8-tetrahydrofolate. It catalyses the reaction IMP + H2O = 5-formamido-1-(5-phospho-D-ribosyl)imidazole-4-carboxamide. It functions in the pathway purine metabolism; IMP biosynthesis via de novo pathway; 5-formamido-1-(5-phospho-D-ribosyl)imidazole-4-carboxamide from 5-amino-1-(5-phospho-D-ribosyl)imidazole-4-carboxamide (10-formyl THF route): step 1/1. The protein operates within purine metabolism; IMP biosynthesis via de novo pathway; IMP from 5-formamido-1-(5-phospho-D-ribosyl)imidazole-4-carboxamide: step 1/1. In Xylella fastidiosa (strain M12), this protein is Bifunctional purine biosynthesis protein PurH.